Here is a 70-residue protein sequence, read N- to C-terminus: Sec-independent protein translocase protein TatA (70 aa).

A helical membrane pass occupies residues 1–21 (MFGLGGQELILILLIILLLFG). The span at 50 to 62 (FNKVVDEPPRKTP) shows a compositional bias: basic and acidic residues. Positions 50 to 70 (FNKVVDEPPRKTPENSTGSKS) are disordered.

The protein belongs to the TatA/E family. In terms of assembly, forms a complex with TatC.

The protein resides in the cell inner membrane. Part of the twin-arginine translocation (Tat) system that transports large folded proteins containing a characteristic twin-arginine motif in their signal peptide across membranes. TatA could form the protein-conducting channel of the Tat system. This chain is Sec-independent protein translocase protein TatA, found in Chlorobium limicola (strain DSM 245 / NBRC 103803 / 6330).